Here is a 375-residue protein sequence, read N- to C-terminus: Aminomethyltransferase (375 aa).

Belongs to the GcvT family. As to quaternary structure, the glycine cleavage system is composed of four proteins: P, T, L and H.

The catalysed reaction is N(6)-[(R)-S(8)-aminomethyldihydrolipoyl]-L-lysyl-[protein] + (6S)-5,6,7,8-tetrahydrofolate = N(6)-[(R)-dihydrolipoyl]-L-lysyl-[protein] + (6R)-5,10-methylene-5,6,7,8-tetrahydrofolate + NH4(+). The glycine cleavage system catalyzes the degradation of glycine. This Cupriavidus metallidurans (strain ATCC 43123 / DSM 2839 / NBRC 102507 / CH34) (Ralstonia metallidurans) protein is Aminomethyltransferase.